The following is a 365-amino-acid chain: MNENHYLLLTPGPLTTTKSVKEVMLYDWCTWDDEYNTMVQEVRAKLVSLATKEEEKYTTVLMQGSGTFSVEAVIGSVIPANGKLLVCTNGAYGKRIVQMAEMLQIDVVISQTEEWEPTNIVEVEKLLQEDKEITHIAVVHCETTTGIINPIVDVCKLGQQYGKVTIVDAMSSFGGIEIDIADLQIDFLISSANKCIQGVPGFGFVIAKRDELLKCKGQGRSLSLDLYDQWETMEKQNGKWRFTSPTHVVHAFYQALLELEKEGGVRARYNRYYNNQKLLVNRMGEIGFKPLVDKKYQSPIITSFIYPKEGFEFQQLYNELKRYGFVIYPGKISKVDTFRIGNIGDVHEEDINRLVDCIAKGAVIG.

N6-(pyridoxal phosphate)lysine is present on K194.

It belongs to the class-V pyridoxal-phosphate-dependent aminotransferase family. PhnW subfamily. In terms of assembly, homodimer. The cofactor is pyridoxal 5'-phosphate.

The enzyme catalyses (2-aminoethyl)phosphonate + pyruvate = phosphonoacetaldehyde + L-alanine. Its function is as follows. Involved in phosphonate degradation. This is 2-aminoethylphosphonate--pyruvate transaminase from Bacillus cereus (strain ATCC 14579 / DSM 31 / CCUG 7414 / JCM 2152 / NBRC 15305 / NCIMB 9373 / NCTC 2599 / NRRL B-3711).